Consider the following 206-residue polypeptide: Small ribosomal subunit protein uS4 (206 aa).

The S4 RNA-binding domain occupies 96 to 156; sequence GRLDNVVYRM…EKAKKQARIK (61 aa).

This sequence belongs to the universal ribosomal protein uS4 family. In terms of assembly, part of the 30S ribosomal subunit. Contacts protein S5. The interaction surface between S4 and S5 is involved in control of translational fidelity.

Functionally, one of the primary rRNA binding proteins, it binds directly to 16S rRNA where it nucleates assembly of the body of the 30S subunit. Its function is as follows. With S5 and S12 plays an important role in translational accuracy. This is Small ribosomal subunit protein uS4 from Aeromonas hydrophila subsp. hydrophila (strain ATCC 7966 / DSM 30187 / BCRC 13018 / CCUG 14551 / JCM 1027 / KCTC 2358 / NCIMB 9240 / NCTC 8049).